The sequence spans 372 residues: F-box/kelch-repeat protein At5g48990 (372 aa).

Residues 14–60 (SSPNPSLPEDLIVSILARVSRSYYTNLSVVSKTFRSILTSPELYKTR) form the F-box domain. A Kelch repeat occupies 176–222 (RTYFPGSSEKPDSLNCVEVYNTNTQTWNPVPPQKRKLKFGNMEGKIY).

In Arabidopsis thaliana (Mouse-ear cress), this protein is F-box/kelch-repeat protein At5g48990.